Consider the following 651-residue polypeptide: J domain-containing protein required for chloroplast accumulation response 1 (651 aa).

The segment covering 1 to 17 has biased composition (polar residues); the sequence is MQTLPSSETVLLGSNSA. Disordered regions lie at residues 1–56, 114–138, 156–176, 250–291, and 308–526; these read MQTL…TRHS, GSRI…QFSL, LNKN…SKAD, KLGK…TDLK, and KPLD…IDEP. S56 carries the phosphoserine modification. Positions 126–137 are enriched in low complexity; that stretch reads SSSGTSSPSQFS. Basic and acidic residues-rich tracts occupy residues 250–259, 281–291, 337–357, 405–416, 441–456, and 488–497; these read KLGKNEEGDG, TKEEKTETDLK, IFHE…EVRK, VGKDGVKGKVSD, RAKE…DGSN, and QKKDSDRESM. Residues 532–562 are a coiled coil; the sequence is DVEDITQDENKMEEANKDAEEIKNIDAKIRK. The J domain maps to 586-651; that stretch reads SGWKPVPLMD…WDHFNTLGPV (66 aa).

In terms of tissue distribution, expressed in leaves and stems, but not in roots.

The protein localises to the cytoplasm. Its function is as follows. Required for chloroplast photorelocation movement; chloroplast accumulation upon low blue light and for chloroplast movement to the bottom of cells in darkness, by modulating chloroplast actin (Cp-actin) filaments distribution, appearance and disappearance. May mediate a slight resistance to aluminum in root hair cells. The protein is J domain-containing protein required for chloroplast accumulation response 1 (JAC1) of Arabidopsis thaliana (Mouse-ear cress).